The following is a 140-amino-acid chain: Phosphoribosyl-AMP cyclohydrolase (140 aa).

A Mg(2+)-binding site is contributed by aspartate 84. Zn(2+) is bound at residue cysteine 85. 2 residues coordinate Mg(2+): aspartate 86 and aspartate 88. Zn(2+) contacts are provided by cysteine 101 and cysteine 108.

This sequence belongs to the PRA-CH family. Homodimer. It depends on Mg(2+) as a cofactor. Zn(2+) serves as cofactor.

It localises to the cytoplasm. The enzyme catalyses 1-(5-phospho-beta-D-ribosyl)-5'-AMP + H2O = 1-(5-phospho-beta-D-ribosyl)-5-[(5-phospho-beta-D-ribosylamino)methylideneamino]imidazole-4-carboxamide. It functions in the pathway amino-acid biosynthesis; L-histidine biosynthesis; L-histidine from 5-phospho-alpha-D-ribose 1-diphosphate: step 3/9. Its function is as follows. Catalyzes the hydrolysis of the adenine ring of phosphoribosyl-AMP. The polypeptide is Phosphoribosyl-AMP cyclohydrolase (Chloroherpeton thalassium (strain ATCC 35110 / GB-78)).